We begin with the raw amino-acid sequence, 218 residues long: Trimethylamine corrinoid protein 2 (218 aa).

Residues 1 to 92 (MAGKEEIIAK…EMEKRKSQTK (92 aa)) form the B12-binding N-terminal domain. The B12-binding domain maps to 94 to 218 (LGTVIIGTIE…AKVKAALKVG (125 aa)). H107 is a methylcob(III)alamin binding site.

Belongs to the methylamine corrinoid protein family. As to quaternary structure, can form a complex with MttB.

It functions in the pathway one-carbon metabolism; methanogenesis from trimethylamine. In terms of biological role, acts probably as a methyl group carrier between MttB and either MtbA or MtaA. The sequence is that of Trimethylamine corrinoid protein 2 (mttC2) from Methanosarcina mazei (strain ATCC BAA-159 / DSM 3647 / Goe1 / Go1 / JCM 11833 / OCM 88) (Methanosarcina frisia).